Consider the following 314-residue polypeptide: 2-dehydro-3-deoxygluconokinase (314 aa).

Substrate contacts are provided by residues 28–32 (GDTLN), Tyr88, 102–104 (YWR), and Arg170. ATP is bound by residues 168–170 (NYR), 228–233 (KCGKNG), and 260–263 (SAGD). Position 263 (Asp263) interacts with substrate. Asp263 functions as the Proton acceptor in the catalytic mechanism.

The protein belongs to the carbohydrate kinase PfkB family.

It catalyses the reaction 2-dehydro-3-deoxy-D-gluconate + ATP = 2-dehydro-3-deoxy-6-phospho-D-gluconate + ADP + H(+). Its pathway is carbohydrate acid metabolism; 2-dehydro-3-deoxy-D-gluconate degradation; D-glyceraldehyde 3-phosphate and pyruvate from 2-dehydro-3-deoxy-D-gluconate: step 1/2. Catalyzes the phosphorylation of 2-keto-3-deoxygluconate (KDG) to produce 2-keto-3-deoxy-6-phosphogluconate (KDPG). This is 2-dehydro-3-deoxygluconokinase (kdgK) from Haemophilus influenzae (strain ATCC 51907 / DSM 11121 / KW20 / Rd).